The chain runs to 127 residues: Ycf91-like protein (127 aa).

The protein belongs to the ycf91 family.

In Nostoc sp. (strain PCC 7120 / SAG 25.82 / UTEX 2576), this protein is Ycf91-like protein.